The chain runs to 629 residues: EF-hand calcium-binding domain-containing protein 7 (629 aa).

Residues Met-1–Lys-25 form a disordered region. Residues Ser-7–Ser-21 are compositionally biased toward polar residues. EF-hand domains are found at residues Thr-102–Lys-137 and Met-138–Gln-173. The tract at residues Asn-195–Asp-229 is disordered. 2 positions are modified to phosphoserine: Ser-200 and Ser-212. The 36-residue stretch at Glu-403–Glu-438 folds into the EF-hand 3 domain. The Ca(2+) site is built by Asp-416, Asp-418, Asn-420, and Glu-427.

Component of the EvC complex composed of EFCAB7, IQCE, EVC2 and EVC; built from two subcomplexes, EVC2:EVC and EFCAB7:IQCE. Interacts (via EF-hand 1 and 2) with IQCE (via N-terminus); this interaction anchors the EVC-EVC2 complex in a signaling microdomain at the base of cilia and stimulates the Hedgehog (Hh) pathway. Interacts with EVC2 (via N-terminal end). Interacts with EVC.

The protein resides in the cell projection. It localises to the cilium membrane. Its function is as follows. Component of the EvC complex that positively regulates ciliary Hedgehog (Hh) signaling. Required for the localization of the EVC2:EVC subcomplex at the base of primary cilia. The sequence is that of EF-hand calcium-binding domain-containing protein 7 (EFCAB7) from Homo sapiens (Human).